The following is a 110-amino-acid chain: Large ribosomal subunit protein uL24 (110 aa).

This sequence belongs to the universal ribosomal protein uL24 family. In terms of assembly, part of the 50S ribosomal subunit.

In terms of biological role, one of two assembly initiator proteins, it binds directly to the 5'-end of the 23S rRNA, where it nucleates assembly of the 50S subunit. Functionally, one of the proteins that surrounds the polypeptide exit tunnel on the outside of the subunit. This chain is Large ribosomal subunit protein uL24, found in Chloroflexus aggregans (strain MD-66 / DSM 9485).